Consider the following 63-residue polypeptide: Cytochrome c oxidase subunit 5A, mitochondrial (63 aa).

Belongs to the cytochrome c oxidase subunit 5A family. In terms of assembly, component of the cytochrome c oxidase (complex IV, CIV), a multisubunit enzyme composed of a catalytic core of 3 subunits and several supernumerary subunits. The complex exists as a monomer or a dimer and forms supercomplexes (SCs) in the inner mitochondrial membrane with ubiquinol-cytochrome c oxidoreductase (cytochrome b-c1 complex, complex III, CIII).

It is found in the mitochondrion inner membrane. It participates in energy metabolism; oxidative phosphorylation. Its function is as follows. Component of the cytochrome c oxidase, the last enzyme in the mitochondrial electron transport chain which drives oxidative phosphorylation. The respiratory chain contains 3 multisubunit complexes succinate dehydrogenase (complex II, CII), ubiquinol-cytochrome c oxidoreductase (cytochrome b-c1 complex, complex III, CIII) and cytochrome c oxidase (complex IV, CIV), that cooperate to transfer electrons derived from NADH and succinate to molecular oxygen, creating an electrochemical gradient over the inner membrane that drives transmembrane transport and the ATP synthase. Cytochrome c oxidase is the component of the respiratory chain that catalyzes the reduction of oxygen to water. Electrons originating from reduced cytochrome c in the intermembrane space (IMS) are transferred via the dinuclear copper A center (CU(A)) of subunit 2 and heme A of subunit 1 to the active site in subunit 1, a binuclear center (BNC) formed by heme A3 and copper B (CU(B)). The BNC reduces molecular oxygen to 2 water molecules using 4 electrons from cytochrome c in the IMS and 4 protons from the mitochondrial matrix. The chain is Cytochrome c oxidase subunit 5A, mitochondrial (COVA) from Manduca sexta (Tobacco hawkmoth).